We begin with the raw amino-acid sequence, 78 residues long: Large ribosomal subunit protein bL28 (78 aa).

This sequence belongs to the bacterial ribosomal protein bL28 family.

This Bordetella avium (strain 197N) protein is Large ribosomal subunit protein bL28.